Here is a 417-residue protein sequence, read N- to C-terminus: NADH-quinone oxidoreductase subunit D (417 aa).

Belongs to the complex I 49 kDa subunit family. NDH-1 is composed of 14 different subunits. Subunits NuoB, C, D, E, F, and G constitute the peripheral sector of the complex.

It is found in the cell inner membrane. The catalysed reaction is a quinone + NADH + 5 H(+)(in) = a quinol + NAD(+) + 4 H(+)(out). Functionally, NDH-1 shuttles electrons from NADH, via FMN and iron-sulfur (Fe-S) centers, to quinones in the respiratory chain. The immediate electron acceptor for the enzyme in this species is believed to be ubiquinone. Couples the redox reaction to proton translocation (for every two electrons transferred, four hydrogen ions are translocated across the cytoplasmic membrane), and thus conserves the redox energy in a proton gradient. This Francisella philomiragia subsp. philomiragia (strain ATCC 25017 / CCUG 19701 / FSC 153 / O#319-036) protein is NADH-quinone oxidoreductase subunit D.